The sequence spans 100 residues: Large ribosomal subunit protein bL21 (100 aa).

The protein belongs to the bacterial ribosomal protein bL21 family. As to quaternary structure, part of the 50S ribosomal subunit. Contacts protein L20.

This protein binds to 23S rRNA in the presence of protein L20. This Paramagnetospirillum magneticum (strain ATCC 700264 / AMB-1) (Magnetospirillum magneticum) protein is Large ribosomal subunit protein bL21.